A 194-amino-acid chain; its full sequence is Type II methyltransferase M.MjaVI (194 aa).

Belongs to the N(4)/N(6)-methyltransferase family. N(4) subfamily.

It catalyses the reaction a 2'-deoxycytidine in DNA + S-adenosyl-L-methionine = an N(4)-methyl-2'-deoxycytidine in DNA + S-adenosyl-L-homocysteine + H(+). In terms of biological role, a beta subtype methylase that recognizes the double-stranded sequence 5'-CCGG-3', methylates C-1 on both strands, and protects the DNA from cleavage by the MjaVI endonuclease. The sequence is that of Type II methyltransferase M.MjaVI (mjaVIM) from Methanocaldococcus jannaschii (strain ATCC 43067 / DSM 2661 / JAL-1 / JCM 10045 / NBRC 100440) (Methanococcus jannaschii).